The primary structure comprises 120 residues: Large ribosomal subunit protein bL19 (120 aa).

It belongs to the bacterial ribosomal protein bL19 family.

Functionally, this protein is located at the 30S-50S ribosomal subunit interface and may play a role in the structure and function of the aminoacyl-tRNA binding site. The chain is Large ribosomal subunit protein bL19 from Chlorobium chlorochromatii (strain CaD3).